Consider the following 245-residue polypeptide: Endogenous retrovirus group K member 5 Env polyprotein (245 aa).

Positions 1-245 are truncated surface protein; the sequence is MVTPVTWMDN…TLEFGLEIKL (245 aa).

This sequence belongs to the beta type-B retroviral envelope protein family. HERV class-II K(HML-2) env subfamily. In terms of tissue distribution, expressed in lung, placenta, testis, peripheral blood lymphocytes, and teratocarcinoma cell lines.

It is found in the virion. Functionally, retroviral envelope proteins mediate receptor recognition and membrane fusion during early infection. Endogenous envelope proteins may have kept, lost or modified their original function during evolution. This chain is Endogenous retrovirus group K member 5 Env polyprotein (ERVK-5), found in Homo sapiens (Human).